The sequence spans 299 residues: Pyridoxal 5'-phosphate synthase subunit PdxS (299 aa).

Residue D24 coordinates D-ribose 5-phosphate. Catalysis depends on K81, which acts as the Schiff-base intermediate with D-ribose 5-phosphate. Residue G153 participates in D-ribose 5-phosphate binding. R165 contributes to the D-glyceraldehyde 3-phosphate binding site. D-ribose 5-phosphate-binding positions include G219 and G240 to S241.

The protein belongs to the PdxS/SNZ family. In terms of assembly, in the presence of PdxT, forms a dodecamer of heterodimers.

The catalysed reaction is aldehydo-D-ribose 5-phosphate + D-glyceraldehyde 3-phosphate + L-glutamine = pyridoxal 5'-phosphate + L-glutamate + phosphate + 3 H2O + H(+). Its pathway is cofactor biosynthesis; pyridoxal 5'-phosphate biosynthesis. Its function is as follows. Catalyzes the formation of pyridoxal 5'-phosphate from ribose 5-phosphate (RBP), glyceraldehyde 3-phosphate (G3P) and ammonia. The ammonia is provided by the PdxT subunit. Can also use ribulose 5-phosphate and dihydroxyacetone phosphate as substrates, resulting from enzyme-catalyzed isomerization of RBP and G3P, respectively. The protein is Pyridoxal 5'-phosphate synthase subunit PdxS of Methanococcus vannielii (strain ATCC 35089 / DSM 1224 / JCM 13029 / OCM 148 / SB).